The sequence spans 241 residues: Acyl-protein thioesterase 1 (241 aa).

Residues Ser122, Asp178, and His211 each act as charge relay system in the active site.

It belongs to the AB hydrolase superfamily. AB hydrolase 2 family.

It is found in the cytoplasm. The protein resides in the nucleus. The catalysed reaction is S-hexadecanoyl-L-cysteinyl-[protein] + H2O = L-cysteinyl-[protein] + hexadecanoate + H(+). Hydrolyzes fatty acids from S-acylated cysteine residues in proteins with a strong preference for palmitoylated G-alpha proteins over other acyl substrates. Mediates the deacylation of G-alpha proteins such as GPA1 in vivo, but has weak or no activity toward palmitoylated Ras proteins. Has weak lysophospholipase activity in vitro; however such activity may not exist in vivo. This is Acyl-protein thioesterase 1 from Aspergillus fumigatus (strain ATCC MYA-4609 / CBS 101355 / FGSC A1100 / Af293) (Neosartorya fumigata).